We begin with the raw amino-acid sequence, 318 residues long: Tyrosine recombinase XerD (318 aa).

Residues Pro-5 to Leu-90 enclose the Core-binding (CB) domain. In terms of domain architecture, Tyr recombinase spans Gly-111–Arg-310. Catalysis depends on residues Arg-161, Lys-185, His-262, Arg-265, and His-288. Tyr-297 acts as the O-(3'-phospho-DNA)-tyrosine intermediate in catalysis.

This sequence belongs to the 'phage' integrase family. XerD subfamily. As to quaternary structure, forms a cyclic heterotetrameric complex composed of two molecules of XerC and two molecules of XerD.

The protein resides in the cytoplasm. Site-specific tyrosine recombinase, which acts by catalyzing the cutting and rejoining of the recombining DNA molecules. The XerC-XerD complex is essential to convert dimers of the bacterial chromosome into monomers to permit their segregation at cell division. It also contributes to the segregational stability of plasmids. The protein is Tyrosine recombinase XerD of Bradyrhizobium diazoefficiens (strain JCM 10833 / BCRC 13528 / IAM 13628 / NBRC 14792 / USDA 110).